A 384-amino-acid polypeptide reads, in one-letter code: Zinc finger protein GLIS2 homolog (384 aa).

The C2H2-type 1 zinc-finger motif lies at 128–153; sequence FVCNWTDCDRVFDTLDALAQHVTQRH. The C2H2-type 2; degenerate zinc-finger motif lies at 163–190; that stretch reads YYCRWRGCQRSERGFNARYKMLVHTRTH. C2H2-type zinc fingers lie at residues 196-218, 224-248, and 254-280; these read HRCH…IRSH, YKCS…TRTH, and YMCK…TFKH. Positions 321–343 are disordered; that stretch reads SSSSARYYDDSNNEPSDYSLKPK.

The protein belongs to the GLI C2H2-type zinc-finger protein family.

Its subcellular location is the nucleus. Functionally, transcription factor which represses a set of lipase genes involved in fat catabolism. This is Zinc finger protein GLIS2 homolog (sug) from Drosophila melanogaster (Fruit fly).